Consider the following 159-residue polypeptide: Probable cyclic pyranopterin monophosphate synthase (159 aa).

Residues 75–77 (LCH) and 111–112 (ME) contribute to the substrate site. The active site involves aspartate 126.

Belongs to the MoaC family. As to quaternary structure, homohexamer; trimer of dimers.

It catalyses the reaction (8S)-3',8-cyclo-7,8-dihydroguanosine 5'-triphosphate = cyclic pyranopterin phosphate + diphosphate. The protein operates within cofactor biosynthesis; molybdopterin biosynthesis. Functionally, catalyzes the conversion of (8S)-3',8-cyclo-7,8-dihydroguanosine 5'-triphosphate to cyclic pyranopterin monophosphate (cPMP). This Pyrococcus horikoshii (strain ATCC 700860 / DSM 12428 / JCM 9974 / NBRC 100139 / OT-3) protein is Probable cyclic pyranopterin monophosphate synthase.